The sequence spans 188 residues: Peptidyl-tRNA hydrolase (188 aa).

Residue tyrosine 14 coordinates tRNA. Histidine 19 acts as the Proton acceptor in catalysis. Positions 64, 66, and 112 each coordinate tRNA.

This sequence belongs to the PTH family. As to quaternary structure, monomer.

The protein resides in the cytoplasm. The catalysed reaction is an N-acyl-L-alpha-aminoacyl-tRNA + H2O = an N-acyl-L-amino acid + a tRNA + H(+). Functionally, hydrolyzes ribosome-free peptidyl-tRNAs (with 1 or more amino acids incorporated), which drop off the ribosome during protein synthesis, or as a result of ribosome stalling. Catalyzes the release of premature peptidyl moieties from peptidyl-tRNA molecules trapped in stalled 50S ribosomal subunits, and thus maintains levels of free tRNAs and 50S ribosomes. The protein is Peptidyl-tRNA hydrolase of Enterococcus faecalis (strain ATCC 700802 / V583).